The sequence spans 278 residues: WLMGHMVNAVKQIPTFLNDGANAIEADITFKGAVPTYSYHGTPCDFGRDCIRWEYFDVFLQTLRDYTTPGNSKYYEKFILFVLDLKTGSLNNNEVRKAGENVAKGLLKNYWNDGNSGGRAYVVLSLPDIAHYEFIRTFKEVLKAEGHEDLLDKVGYDLSGPYLPSLPSLDSVHEAFKKAGVDGHVWLSDGLTNWAPLGDMARLKEIVKRRDSENGFISKVYYWSVDRYSTTRTALDVGVDGIMTNFPYVIIDVLNENGYKDKYRLATYDDNPWETFKK.

His-5 is an active-site residue. Positions 25 and 27 each coordinate Mg(2+). His-40 (nucleophile) is an active-site residue. Cys-44 and Cys-50 are disulfide-bonded. Mg(2+) is bound at residue Asp-84.

The protein belongs to the arthropod phospholipase D family. Class I subfamily. Mg(2+) serves as cofactor. Expressed by the venom gland.

It is found in the secreted. The enzyme catalyses an N-(acyl)-sphingosylphosphocholine = an N-(acyl)-sphingosyl-1,3-cyclic phosphate + choline. It carries out the reaction an N-(acyl)-sphingosylphosphoethanolamine = an N-(acyl)-sphingosyl-1,3-cyclic phosphate + ethanolamine. It catalyses the reaction a 1-acyl-sn-glycero-3-phosphocholine = a 1-acyl-sn-glycero-2,3-cyclic phosphate + choline. The catalysed reaction is a 1-acyl-sn-glycero-3-phosphoethanolamine = a 1-acyl-sn-glycero-2,3-cyclic phosphate + ethanolamine. In terms of biological role, dermonecrotic toxins cleave the phosphodiester linkage between the phosphate and headgroup of certain phospholipids (sphingolipid and lysolipid substrates), forming an alcohol (often choline) and a cyclic phosphate. This toxin acts on sphingomyelin (SM). It may also act on ceramide phosphoethanolamine (CPE), lysophosphatidylcholine (LPC) and lysophosphatidylethanolamine (LPE), but not on lysophosphatidylserine (LPS), and lysophosphatidylglycerol (LPG). It acts by transphosphatidylation, releasing exclusively cyclic phosphate products as second products. Induces dermonecrosis, hemolysis, increased vascular permeability, edema, inflammatory response, and platelet aggregation. The chain is Dermonecrotic toxin LlSicTox-alphaIII3ii from Loxosceles laeta (South American recluse spider).